Here is a 306-residue protein sequence, read N- to C-terminus: UDP-3-O-acyl-N-acetylglucosamine deacetylase (306 aa).

Zn(2+) contacts are provided by His-79, His-239, and Asp-243. Residue His-266 is the Proton donor of the active site.

The protein belongs to the LpxC family. Requires Zn(2+) as cofactor.

The enzyme catalyses a UDP-3-O-[(3R)-3-hydroxyacyl]-N-acetyl-alpha-D-glucosamine + H2O = a UDP-3-O-[(3R)-3-hydroxyacyl]-alpha-D-glucosamine + acetate. Its pathway is glycolipid biosynthesis; lipid IV(A) biosynthesis; lipid IV(A) from (3R)-3-hydroxytetradecanoyl-[acyl-carrier-protein] and UDP-N-acetyl-alpha-D-glucosamine: step 2/6. Functionally, catalyzes the hydrolysis of UDP-3-O-myristoyl-N-acetylglucosamine to form UDP-3-O-myristoylglucosamine and acetate, the committed step in lipid A biosynthesis. In Actinobacillus pleuropneumoniae serotype 7 (strain AP76), this protein is UDP-3-O-acyl-N-acetylglucosamine deacetylase.